The primary structure comprises 1157 residues: uncharacterized protein (1157 aa).

The N-terminal stretch at 1–18 (MNRNIFITLLISLLALSG) is a signal peptide. C19 carries the N-palmitoyl cysteine lipid modification. C19 carries S-diacylglycerol cysteine lipidation. 4 helical membrane passes run 292 to 312 (LSVS…FLIG), 394 to 414 (LGFI…LLIF), 423 to 443 (ALIT…FMLF), and 458 to 478 (ISYA…GMII). The disordered stretch occupies residues 1134-1157 (QYQKPVENSGRKLRKLEDHLRNMK). The span at 1148 to 1157 (KLEDHLRNMK) shows a compositional bias: basic and acidic residues.

Belongs to the TrbL/VirB6 family.

It localises to the cell membrane. This is an uncharacterized protein from Rickettsia bellii (strain RML369-C).